The following is a 396-amino-acid chain: Flavohemoprotein (396 aa).

The 136-residue stretch at 1-136 (MLDTQTIAIV…LADVFIQRES (136 aa)) folds into the Globin domain. Histidine 85 serves as a coordination point for heme b. Active-site charge relay system residues include tyrosine 95 and glutamate 135. Positions 147 to 396 (GGWRTLRRFR…YECFGPHKVI (250 aa)) are reductase. In terms of domain architecture, FAD-binding FR-type spans 150–255 (RTLRRFRIIK…APPRGDFFLD (106 aa)). FAD contacts are provided by residues tyrosine 188 and 204 to 207 (RQYS). 268 to 273 (GVGQTP) is a binding site for NADP(+). 389-392 (CFGP) is a binding site for FAD.

The protein belongs to the globin family. Two-domain flavohemoproteins subfamily. This sequence in the C-terminal section; belongs to the flavoprotein pyridine nucleotide cytochrome reductase family. Heme b serves as cofactor. It depends on FAD as a cofactor.

It carries out the reaction 2 nitric oxide + NADPH + 2 O2 = 2 nitrate + NADP(+) + H(+). The enzyme catalyses 2 nitric oxide + NADH + 2 O2 = 2 nitrate + NAD(+) + H(+). In terms of biological role, is involved in NO detoxification in an aerobic process, termed nitric oxide dioxygenase (NOD) reaction that utilizes O(2) and NAD(P)H to convert NO to nitrate, which protects the bacterium from various noxious nitrogen compounds. Therefore, plays a central role in the inducible response to nitrosative stress. In Yersinia pestis, this protein is Flavohemoprotein.